A 134-amino-acid polypeptide reads, in one-letter code: ATP synthase epsilon chain (134 aa).

It belongs to the ATPase epsilon chain family. F-type ATPases have 2 components, CF(1) - the catalytic core - and CF(0) - the membrane proton channel. CF(1) has five subunits: alpha(3), beta(3), gamma(1), delta(1), epsilon(1). CF(0) has three main subunits: a, b and c. In this bacterium the a and b subunits are transcribed but do not seem to be translated, thus the ATP synthase consists of the alpha, beta, gamma, delta, epsilon and c subunits.

The protein resides in the cell membrane. Produces ATP from ADP in the presence of a proton gradient across the membrane. The protein is ATP synthase epsilon chain of Moorella thermoacetica (strain ATCC 39073 / JCM 9320).